We begin with the raw amino-acid sequence, 226 residues long: NAD(P)H-hydrate epimerase (226 aa).

The YjeF N-terminal domain occupies 10–215 (AIELDLDLFE…ALQRKYQLNL (206 aa)). (6S)-NADPHX is bound at residue 58–62 (NNGGD). K(+) is bound by residues asparagine 59 and aspartate 123. Residues 127 to 133 (GFGFKPP) and aspartate 156 contribute to the (6S)-NADPHX site. Serine 159 contributes to the K(+) binding site.

Belongs to the NnrE/AIBP family. The cofactor is K(+).

It catalyses the reaction (6R)-NADHX = (6S)-NADHX. The enzyme catalyses (6R)-NADPHX = (6S)-NADPHX. Functionally, catalyzes the epimerization of the S- and R-forms of NAD(P)HX, a damaged form of NAD(P)H that is a result of enzymatic or heat-dependent hydration. This is a prerequisite for the S-specific NAD(P)H-hydrate dehydratase to allow the repair of both epimers of NAD(P)HX. This chain is NAD(P)H-hydrate epimerase, found in Drosophila persimilis (Fruit fly).